Here is a 204-residue protein sequence, read N- to C-terminus: Ricin B-like lectin R40G3 (204 aa).

Residues T54 to I200 enclose the Ricin B-type lectin domain.

Expressed in shoots and lamina.

Lectin which binds carbohydrates in vitro. Interacts through its lectin domain with glycan structures containing specific motifs. This Oryza sativa subsp. japonica (Rice) protein is Ricin B-like lectin R40G3.